The chain runs to 588 residues: Sulfite reductase [NADPH] hemoprotein beta-component (588 aa).

Residues cysteine 442, cysteine 448, cysteine 487, and cysteine 491 each contribute to the [4Fe-4S] cluster site. Siroheme is bound at residue cysteine 491.

This sequence belongs to the nitrite and sulfite reductase 4Fe-4S domain family. As to quaternary structure, alpha(8)-beta(8). The alpha component is a flavoprotein, the beta component is a hemoprotein. Siroheme is required as a cofactor. The cofactor is [4Fe-4S] cluster.

The catalysed reaction is hydrogen sulfide + 3 NADP(+) + 3 H2O = sulfite + 3 NADPH + 4 H(+). The protein operates within sulfur metabolism; hydrogen sulfide biosynthesis; hydrogen sulfide from sulfite (NADPH route): step 1/1. Functionally, component of the sulfite reductase complex that catalyzes the 6-electron reduction of sulfite to sulfide. This is one of several activities required for the biosynthesis of L-cysteine from sulfate. In Actinobacillus pleuropneumoniae serotype 7 (strain AP76), this protein is Sulfite reductase [NADPH] hemoprotein beta-component.